Consider the following 527-residue polypeptide: Phosphoethanolamine transferase OpgE (527 aa).

The Periplasmic segment spans residues 1–33; it reads MNLTLKESLVTRSRVFSPWTAFYFLQSLLINLG. The chain crosses the membrane as a helical span at residues 34–54; the sequence is LGYPFSLLYTAAFTAILLLLW. Topologically, residues 55 to 62 are cytoplasmic; sequence RTLPRVQK. A helical transmembrane segment spans residues 63–83; sequence VLVGVSSLVAACYFPFAQAYG. Residues 84 to 106 are Periplasmic-facing; it reads APNFNTLLALHSTNMEESTEILT. A helical membrane pass occupies residues 107 to 127; that stretch reads IFPWYSYLVGLFIFALGVIAI. The Cytoplasmic portion of the chain corresponds to 128–146; sequence RRKKENEKARWNTFDSLCL. Residues 147–167 traverse the membrane as a helical segment; sequence VFSVATFFVAPVQNLAWGGVF. The Periplasmic portion of the chain corresponds to 168 to 527; it reads KLKDTGYPVF…LGTDIFDPKP (360 aa).

This sequence belongs to the phosphoethanolamine transferase family.

The protein localises to the cell inner membrane. Its pathway is glycan metabolism; osmoregulated periplasmic glucan (OPG) biosynthesis. Its function is as follows. Catalyzes the addition of a phosphoethanolamine moiety to the osmoregulated periplasmic glucan (OPG) backbone. This Escherichia coli (strain K12) protein is Phosphoethanolamine transferase OpgE (opgE).